A 292-amino-acid chain; its full sequence is Acidic endochitinase (292 aa).

An N-terminal signal peptide occupies residues 1–25; the sequence is MAAHKITTTLSIFFLLSSIFRSSDA. The GH18 domain maps to 26-292; sequence AGIAIYWGQN…YSDSIKGSIG (267 aa). Intrachain disulfides connect Cys45-Cys92 and Cys75-Cys82. The active-site Proton donor is Glu152. The cysteines at positions 180 and 209 are disulfide-linked.

Belongs to the glycosyl hydrolase 18 family. Chitinase class II subfamily.

Its subcellular location is the secreted. The protein localises to the extracellular space. It carries out the reaction Random endo-hydrolysis of N-acetyl-beta-D-glucosaminide (1-&gt;4)-beta-linkages in chitin and chitodextrins.. Its function is as follows. This protein functions as a defense against chitin containing fungal pathogens. The sequence is that of Acidic endochitinase from Cucumis sativus (Cucumber).